The following is a 399-amino-acid chain: Imidazolonepropionase (399 aa).

A compositionally biased stretch (polar residues) spans 1–13; it reads MSETLYTGISQLA. The interval 1–20 is disordered; that stretch reads MSETLYTGISQLATPRPGPQ. Residues H74 and H76 each contribute to the Fe(3+) site. Zn(2+)-binding residues include H74 and H76. Positions 83, 146, and 176 each coordinate 4-imidazolone-5-propanoate. Y146 serves as a coordination point for N-formimidoyl-L-glutamate. Residue H238 coordinates Fe(3+). Residue H238 coordinates Zn(2+). Q241 contributes to the 4-imidazolone-5-propanoate binding site. Fe(3+) is bound at residue D312. A Zn(2+)-binding site is contributed by D312. N-formimidoyl-L-glutamate is bound by residues N314 and G316. S317 contributes to the 4-imidazolone-5-propanoate binding site.

Belongs to the metallo-dependent hydrolases superfamily. HutI family. Zn(2+) serves as cofactor. The cofactor is Fe(3+).

It is found in the cytoplasm. It catalyses the reaction 4-imidazolone-5-propanoate + H2O = N-formimidoyl-L-glutamate. It functions in the pathway amino-acid degradation; L-histidine degradation into L-glutamate; N-formimidoyl-L-glutamate from L-histidine: step 3/3. Functionally, catalyzes the hydrolytic cleavage of the carbon-nitrogen bond in imidazolone-5-propanoate to yield N-formimidoyl-L-glutamate. It is the third step in the universal histidine degradation pathway. This is Imidazolonepropionase from Deinococcus radiodurans (strain ATCC 13939 / DSM 20539 / JCM 16871 / CCUG 27074 / LMG 4051 / NBRC 15346 / NCIMB 9279 / VKM B-1422 / R1).